Here is a 99-residue protein sequence, read N- to C-terminus: Integration host factor subunit alpha (99 aa).

The segment at 49–73 is disordered; the sequence is FGNFDLRDKNQRPGRNPKTGEDIPI.

This sequence belongs to the bacterial histone-like protein family. As to quaternary structure, heterodimer of an alpha and a beta chain.

This protein is one of the two subunits of integration host factor, a specific DNA-binding protein that functions in genetic recombination as well as in transcriptional and translational control. This Serratia marcescens protein is Integration host factor subunit alpha (ihfA).